The primary structure comprises 339 residues: Nicotinate-nucleotide--dimethylbenzimidazole phosphoribosyltransferase (339 aa).

The Proton acceptor role is filled by Glu306.

This sequence belongs to the CobT family.

It catalyses the reaction 5,6-dimethylbenzimidazole + nicotinate beta-D-ribonucleotide = alpha-ribazole 5'-phosphate + nicotinate + H(+). It participates in nucleoside biosynthesis; alpha-ribazole biosynthesis; alpha-ribazole from 5,6-dimethylbenzimidazole: step 1/2. Functionally, catalyzes the synthesis of alpha-ribazole-5'-phosphate from nicotinate mononucleotide (NAMN) and 5,6-dimethylbenzimidazole (DMB). The chain is Nicotinate-nucleotide--dimethylbenzimidazole phosphoribosyltransferase from Brucella abortus (strain S19).